The following is a 119-amino-acid chain: Large ribosomal subunit protein bL20 (119 aa).

Belongs to the bacterial ribosomal protein bL20 family.

Its function is as follows. Binds directly to 23S ribosomal RNA and is necessary for the in vitro assembly process of the 50S ribosomal subunit. It is not involved in the protein synthesizing functions of that subunit. The protein is Large ribosomal subunit protein bL20 of Heliobacterium modesticaldum (strain ATCC 51547 / Ice1).